A 355-amino-acid chain; its full sequence is UDP-N-acetylglucosamine--N-acetylmuramyl-(pentapeptide) pyrophosphoryl-undecaprenol N-acetylglucosamine transferase (355 aa).

UDP-N-acetyl-alpha-D-glucosamine contacts are provided by residues 15–17 (TGG), N127, R163, S191, I244, 263–268 (ALTVSE), and Q288.

This sequence belongs to the glycosyltransferase 28 family. MurG subfamily.

It is found in the cell inner membrane. The catalysed reaction is di-trans,octa-cis-undecaprenyl diphospho-N-acetyl-alpha-D-muramoyl-L-alanyl-D-glutamyl-meso-2,6-diaminopimeloyl-D-alanyl-D-alanine + UDP-N-acetyl-alpha-D-glucosamine = di-trans,octa-cis-undecaprenyl diphospho-[N-acetyl-alpha-D-glucosaminyl-(1-&gt;4)]-N-acetyl-alpha-D-muramoyl-L-alanyl-D-glutamyl-meso-2,6-diaminopimeloyl-D-alanyl-D-alanine + UDP + H(+). Its pathway is cell wall biogenesis; peptidoglycan biosynthesis. Cell wall formation. Catalyzes the transfer of a GlcNAc subunit on undecaprenyl-pyrophosphoryl-MurNAc-pentapeptide (lipid intermediate I) to form undecaprenyl-pyrophosphoryl-MurNAc-(pentapeptide)GlcNAc (lipid intermediate II). This is UDP-N-acetylglucosamine--N-acetylmuramyl-(pentapeptide) pyrophosphoryl-undecaprenol N-acetylglucosamine transferase from Cronobacter sakazakii (strain ATCC BAA-894) (Enterobacter sakazakii).